Here is a 473-residue protein sequence, read N- to C-terminus: Kremen protein 1 (473 aa).

Residues 1 to 19 form the signal peptide; the sequence is MAPPAARLALLSAAALTLA. The Extracellular portion of the chain corresponds to 21–392; sequence RPAPGPRPSP…ASGHRVEGWT (372 aa). In terms of domain architecture, Kringle spans 31 to 114; the sequence is ECFTANGADY…YWKYCEIPAC (84 aa). Cystine bridges form between Cys-32/Cys-114, Cys-55/Cys-95, Cys-84/Cys-109, Cys-122/Cys-186, Cys-147/Cys-167, Cys-151/Cys-169, Cys-190/Cys-198, and Cys-214/Cys-240. Residue Asn-59 is glycosylated (N-linked (GlcNAc...) asparagine). The region spanning 116–210 is the WSC domain; sequence MPGNLGCYKD…DGRIILFDTL (95 aa). A CUB domain is found at 214-321; that stretch reads CGGNYSSMAA…QGFAVLYQAT (108 aa). Asn-217, Asn-255, Asn-293, Asn-333, and Asn-345 each carry an N-linked (GlcNAc...) asparagine glycan. Residues 393–413 form a helical membrane-spanning segment; it reads VYGLATLLILTVTAVVAKILL. Topologically, residues 414 to 473 are cytoplasmic; it reads HVTFKSHRVTASGDLRDCRQPGTSGEIWTIFYEPSTTISIFKKKLKGQSQQDDRNPLVSD. Residues 414–473 form an essential for apoptotic activity region; the sequence is HVTFKSHRVTASGDLRDCRQPGTSGEIWTIFYEPSTTISIFKKKLKGQSQQDDRNPLVSD.

As to quaternary structure, forms a ternary complex with DKK1 and LRP6. Interacts with LRP6 in a DKK1-dependent manner. Interacts with DKK1 and RSPO1 (via FU repeats).

The protein localises to the cell membrane. Its function is as follows. Receptor for Dickkopf proteins. Cooperates with DKK1/2 to inhibit Wnt/beta-catenin signaling by promoting the endocytosis of Wnt receptors LRP5 and LRP6. In the absence of DKK1, potentiates Wnt-beta-catenin signaling by maintaining LRP5 or LRP6 at the cell membrane. Can trigger apoptosis in a Wnt-independent manner and this apoptotic activity is inhibited upon binding of the ligand DKK1. Plays a role in limb development; attenuates Wnt signaling in the developing limb to allow normal limb patterning and can also negatively regulate bone formation. Modulates cell fate decisions in the developing cochlea with an inhibitory role in hair cell fate specification. The polypeptide is Kremen protein 1 (Kremen1) (Rattus norvegicus (Rat)).